We begin with the raw amino-acid sequence, 328 residues long: Ornithine carbamoyltransferase, catabolic (328 aa).

Carbamoyl phosphate contacts are provided by residues S56–T59, Q83, R107, and H134–Q137. L-ornithine-binding positions include N166, D230, and S234–M235. Carbamoyl phosphate-binding positions include C270–L271 and R315.

Belongs to the aspartate/ornithine carbamoyltransferase superfamily. OTCase family.

The protein resides in the cytoplasm. The enzyme catalyses carbamoyl phosphate + L-ornithine = L-citrulline + phosphate + H(+). It participates in amino-acid degradation; L-arginine degradation via ADI pathway; carbamoyl phosphate from L-arginine: step 2/2. In terms of biological role, reversibly catalyzes the transfer of the carbamoyl group from carbamoyl phosphate (CP) to the N(epsilon) atom of ornithine (ORN) to produce L-citrulline. This Borreliella afzelii (Borrelia afzelii) protein is Ornithine carbamoyltransferase, catabolic (arcB).